Here is a 648-residue protein sequence, read N- to C-terminus: Probable alpha-galactosidase D (648 aa).

The first 17 residues, 1 to 17 (MESIVWLLLLSPALVAG), serve as a signal peptide directing secretion. N-linked (GlcNAc...) asparagine glycans are attached at residues asparagine 84 and asparagine 90. A disulfide bridge connects residues cysteine 123 and cysteine 156. The active-site Nucleophile is the aspartate 154. 199 to 203 (EWGID) serves as a coordination point for substrate. Aspartate 221 serves as the catalytic Proton donor. Residues asparagine 339, asparagine 505, and asparagine 572 are each glycosylated (N-linked (GlcNAc...) asparagine).

It belongs to the glycosyl hydrolase 27 family.

It localises to the secreted. The enzyme catalyses Hydrolysis of terminal, non-reducing alpha-D-galactose residues in alpha-D-galactosides, including galactose oligosaccharides, galactomannans and galactolipids.. In terms of biological role, hydrolyzes a variety of simple alpha-D-galactoside as well as more complex molecules such as oligosaccharides and polysaccharides. This chain is Probable alpha-galactosidase D (aglD), found in Neosartorya fischeri (strain ATCC 1020 / DSM 3700 / CBS 544.65 / FGSC A1164 / JCM 1740 / NRRL 181 / WB 181) (Aspergillus fischerianus).